Here is a 156-residue protein sequence, read N- to C-terminus: Probable inactive ribonuclease-like protein 13 (156 aa).

A signal peptide spans 1–20 (MAPAVTRLLFLQLVLGPTLV). An N-linked (GlcNAc...) asparagine glycan is attached at N126.

The protein belongs to the pancreatic ribonuclease family.

Its subcellular location is the secreted. Does not exhibit any ribonuclease activity. The sequence is that of Probable inactive ribonuclease-like protein 13 (RNASE13) from Homo sapiens (Human).